We begin with the raw amino-acid sequence, 243 residues long: Uridylate kinase (243 aa).

Position 14 to 17 (14 to 17 (KLSG)) interacts with ATP. Gly-57 serves as a coordination point for UMP. Residues Gly-58 and Arg-62 each coordinate ATP. UMP is bound by residues Asp-77 and 139 to 146 (TGRPYFTT). 3 residues coordinate ATP: Asn-167, Tyr-173, and Asp-176.

Belongs to the UMP kinase family. Homohexamer.

Its subcellular location is the cytoplasm. It catalyses the reaction UMP + ATP = UDP + ADP. Its pathway is pyrimidine metabolism; CTP biosynthesis via de novo pathway; UDP from UMP (UMPK route): step 1/1. With respect to regulation, inhibited by UTP. Functionally, catalyzes the reversible phosphorylation of UMP to UDP. This is Uridylate kinase from Mycoplasmopsis pulmonis (strain UAB CTIP) (Mycoplasma pulmonis).